Reading from the N-terminus, the 108-residue chain is Protein YcgL (108 aa).

Residues Met-12 to Leu-96 enclose the YcgL domain.

This chain is Protein YcgL, found in Escherichia coli O127:H6 (strain E2348/69 / EPEC).